A 741-amino-acid polypeptide reads, in one-letter code: Eukaryotic translation initiation factor 3 subunit B (741 aa).

The segment covering 1–10 (MAPSFDTLSE) has biased composition (polar residues). Residues 1 to 21 (MAPSFDTLSEQDLHEEEEEEI) form a disordered region. An RRM domain is found at 40 to 126 (TFIVIDGLPI…HTLAVNKLMD (87 aa)). WD repeat units follow at residues 193–230 (AHWT…KQKQ), 232–289 (PHPF…RSFV), 303–344 (APKK…LLGK), 514–557 (IEKK…EKAE), and 572–610 (VEHY…HTFA). The segment at 696-723 (DAYGIPEDADDAKVAKDAPPVSEDQGEA) is disordered.

It belongs to the eIF-3 subunit B family. Component of the eukaryotic translation initiation factor 3 (eIF-3) complex.

It localises to the cytoplasm. RNA-binding component of the eukaryotic translation initiation factor 3 (eIF-3) complex, which is involved in protein synthesis of a specialized repertoire of mRNAs and, together with other initiation factors, stimulates binding of mRNA and methionyl-tRNAi to the 40S ribosome. The eIF-3 complex specifically targets and initiates translation of a subset of mRNAs involved in cell proliferation. The sequence is that of Eukaryotic translation initiation factor 3 subunit B (prt1) from Aspergillus oryzae (strain ATCC 42149 / RIB 40) (Yellow koji mold).